The chain runs to 180 residues: Ribulose bisphosphate carboxylase small subunit, chloroplastic 2 (180 aa).

A chloroplast-targeting transit peptide spans 1-54 (MASMMSNAAVVGRTTPAQASMVAPFTGLKSVSAFPVTKKSNDITSIASNGGRVQ).

This sequence belongs to the RuBisCO small chain family. As to quaternary structure, heterohexadecamer of 8 large and 8 small subunits.

It localises to the plastid. The protein localises to the chloroplast. In terms of biological role, ruBisCO catalyzes two reactions: the carboxylation of D-ribulose 1,5-bisphosphate, the primary event in carbon dioxide fixation, as well as the oxidative fragmentation of the pentose substrate. Both reactions occur simultaneously and in competition at the same active site. Although the small subunit is not catalytic it is essential for maximal activity. This chain is Ribulose bisphosphate carboxylase small subunit, chloroplastic 2, found in Mesembryanthemum crystallinum (Common ice plant).